Consider the following 515-residue polypeptide: Maturase K (515 aa).

It belongs to the intron maturase 2 family. MatK subfamily.

The protein localises to the plastid. It is found in the chloroplast. Its function is as follows. Usually encoded in the trnK tRNA gene intron. Probably assists in splicing its own and other chloroplast group II introns. The chain is Maturase K from Pseudotsuga menziesii (Douglas-fir).